A 1883-amino-acid chain; its full sequence is AF4/FMR2 family member lilli (1883 aa).

A compositionally biased stretch (low complexity) spans 1–45; it reads MAQQQQQQHLQQQQQQHHQQQQLQQLQQQQQLPQYNNNLYNLNYN. 17 disordered regions span residues 1 to 88, 140 to 311, 329 to 381, 449 to 540, 609 to 654, 796 to 827, 844 to 901, 922 to 962, 992 to 1018, 1039 to 1075, 1115 to 1145, 1170 to 1238, 1358 to 1413, 1450 to 1510, 1543 to 1583, 1595 to 1641, and 1783 to 1803; these read MAQQ…SEGD, INST…EKDI, SIAA…SCTT, MPTP…HHQH, LGGG…HLSR, SISSGSASGSSSSDSAAGEVVPLPGPGETLQI, MQQK…KKHA, TAAA…LAKG, VAGSRKREHSSNSSSNGNTPTKKLHAA, TAAAGSSSDEDSTSSSCSSTKSSNSSSSGSDSEATAT, KNNRLYGAGSSSNSSSSETEEQQQQQQQHKQ, QHQQ…KSDK, YAAE…GART, EHGV…DQVS, ANGS…KATT, QTST…PPSD, and PSNSVGSQGSGSNTPPGRIVP. A compositionally biased stretch (basic and acidic residues) spans 57–80; it reads REKYERQQGIQSDDRETSLFEAPR. Composition is skewed to low complexity over residues 140-154, 161-178, 223-253, and 362-381; these read INSTTTTSSSASLLP, QQQQQQQQQQQQHYQQQQ, SASSSSSASNNNSSSATNNATAAAATSASTA, and PLNSPPAASGASSSSLSCTT. Positions 450–462 are enriched in pro residues; that stretch reads PTPPKASPTPPTA. Thr458 bears the Phosphothreonine mark. The span at 466–479 shows a compositional bias: basic and acidic residues; the sequence is LKSEKNHSLEKQDS. The segment covering 481 to 491 has biased composition (acidic residues); sequence LENDLELSESD. Phosphoserine occurs at positions 488 and 490. Positions 500-540 are enriched in low complexity; sequence SAGNSSNSSETDSSESGSEASSKGEAQQQQQQQQQLLHHQH. Positions 609 to 625 are enriched in gly residues; the sequence is LGGGGGSGSTGGGGGSS. Composition is skewed to low complexity over residues 626–639 and 796–813; these read SSGMGNMSSSSSSN and SISSGSASGSSSSDSAAG. The span at 867–877 shows a compositional bias: basic residues; that stretch reads PRQKKPRKKKM. 2 positions are modified to phosphoserine: Ser887 and Ser888. A DNA-binding region (a.T hook) is located at residues 930-942; that stretch reads KKGRGRPRKQQQQ. Residues 939 to 962 show a composition bias toward low complexity; the sequence is QQQQLQQTQSGNLSSASAGSLAKG. 2 positions are modified to phosphoserine: Ser953 and Ser955. 5 stretches are compositionally biased toward low complexity: residues 1124–1145, 1170–1186, 1200–1222, 1362–1376, and 1385–1399; these read SSSNSSSSETEEQQQQQQQHKQ, QHQQQQPLQPQQQQQQQ, SSSSDGSSSSSTDSSSTNSSSSS, QQQQQQQHLHTQQLH, and HYQQQHQPHQQKAQQ. Residues 1450-1467 are compositionally biased toward basic and acidic residues; it reads EHGVKPEPELDAGYEAKY. Ser1546 is modified (phosphoserine). Position 1548 is a phosphothreonine (Thr1548). 2 stretches are compositionally biased toward low complexity: residues 1558–1583 and 1595–1606; these read QQQQHQQQQQQQQHQPQHQQQLKATT and QTSTTATQQPTT. Residues 1614 to 1625 show a composition bias toward pro residues; that stretch reads TPPPVAPPPPPR. Residues 1783–1794 show a composition bias toward low complexity; sequence PSNSVGSQGSGS.

Belongs to the AF4 family.

It localises to the nucleus. In terms of biological role, has a role in transcriptional regulation. Acts in parallel with the Ras/MAPK and the PI3K/PKB pathways in the control of cell identity and cellular growth. Essential for regulation of the cytoskeleton and cell growth but not for cell proliferation or growth rate. Required specifically for the microtubule-based basal transport of lipid droplets. Plays a partially redundant function downstream of Raf in cell fate specification in the developing eye. Pair-rule protein that regulates embryonic cellularization, gastrulation and segmentation. The sequence is that of AF4/FMR2 family member lilli from Drosophila grimshawi (Hawaiian fruit fly).